The following is a 298-amino-acid chain: Probable mitochondrial 2-oxodicarboxylate carrier (298 aa).

Transmembrane regions (helical) follow at residues 6-26, 62-81, 105-125, 159-179, 203-223, and 267-287; these read IPFP…VLTL, HRLY…KRAL, ALSI…VVPF, ALYN…AGYF, LIAG…FDVI, and VLRL…VIEF. 3 Solcar repeats span residues 6 to 92, 102 to 188, and 197 to 287; these read IPFP…YSKL, SSPA…IRNS, and GEIR…VIEF.

It belongs to the mitochondrial carrier (TC 2.A.29) family.

It localises to the mitochondrion inner membrane. Transports C5-C7 oxodicarboxylates across the inner membranes of mitochondria. This Schizosaccharomyces pombe (strain 972 / ATCC 24843) (Fission yeast) protein is Probable mitochondrial 2-oxodicarboxylate carrier.